Reading from the N-terminus, the 500-residue chain is Glycerol kinase (500 aa).

T14 contributes to the ADP binding site. Residues T14, T15, and S16 each contribute to the ATP site. T14 provides a ligand contact to sn-glycerol 3-phosphate. R18 is an ADP binding site. Residues R84, E85, and Y136 each coordinate sn-glycerol 3-phosphate. Glycerol is bound by residues R84, E85, and Y136. Residue H232 is modified to Phosphohistidine; by HPr. D246 is a binding site for sn-glycerol 3-phosphate. The glycerol site is built by D246 and Q247. ADP-binding residues include T268 and G311. The ATP site is built by T268, G311, Q315, and G412. Positions 412 and 416 each coordinate ADP.

Belongs to the FGGY kinase family. As to quaternary structure, homotetramer and homodimer (in equilibrium). The phosphoenolpyruvate-dependent sugar phosphotransferase system (PTS), including enzyme I, and histidine-containing protein (HPr) are required for the phosphorylation, which leads to the activation of the enzyme.

The enzyme catalyses glycerol + ATP = sn-glycerol 3-phosphate + ADP + H(+). It functions in the pathway polyol metabolism; glycerol degradation via glycerol kinase pathway; sn-glycerol 3-phosphate from glycerol: step 1/1. Its activity is regulated as follows. Activated by phosphorylation and inhibited by fructose 1,6-bisphosphate (FBP). Key enzyme in the regulation of glycerol uptake and metabolism. Catalyzes the phosphorylation of glycerol to yield sn-glycerol 3-phosphate. The chain is Glycerol kinase from Streptococcus uberis (strain ATCC BAA-854 / 0140J).